A 294-amino-acid polypeptide reads, in one-letter code: Cytidine deaminase (294 aa).

CMP/dCMP-type deaminase domains lie at 48 to 168 (DEDA…FGPK) and 186 to 294 (VSGD…VLLG). 89 to 91 (NME) provides a ligand contact to substrate. Histidine 102 serves as a coordination point for Zn(2+). The active-site Proton donor is the glutamate 104. Residues cysteine 129 and cysteine 132 each contribute to the Zn(2+) site.

Belongs to the cytidine and deoxycytidylate deaminase family. In terms of assembly, homodimer. The cofactor is Zn(2+).

It catalyses the reaction cytidine + H2O + H(+) = uridine + NH4(+). The enzyme catalyses 2'-deoxycytidine + H2O + H(+) = 2'-deoxyuridine + NH4(+). Functionally, this enzyme scavenges exogenous and endogenous cytidine and 2'-deoxycytidine for UMP synthesis. The protein is Cytidine deaminase of Klebsiella pneumoniae (strain 342).